The following is a 578-amino-acid chain: Putative ankyrin repeat protein FPV022 (578 aa).

ANK repeat units follow at residues 4–34, 38–67, 68–97, 100–129, 160–189, 222–251, 255–287, 320–349, 353–382, 386–415, and 419–449; these read RRKSAFKRAIDEDDVDIIRKLLSYKPIDLNK, KNRTILCRAVSMKSHKVAEFLLSNGSKMSA, CKVPPLIISVRNKDLTMAKILVSYGASVDV, KGETPLLTAIKTGYIEIIDYLLSLEPSGPY, YGHTALYYAVKKGNLSLIKLLVENKAITDN, EGTTALHYAVEAERLEAVRYLLDIGCDPKV, HSVSPLYYAIKRKNKIILDELIKFYTVEFMVNM, YLSELLYESIKTNNPEIVSLILGLGANINK, YGNIPLQTAIIYQTDNVFNLLLQKGADVNA, DGNTILHTLAACCKYKKIKLVLDLGSDINS, and NGRTPIEEACPCKKTIRTLISHLIIMIKKNK.

The protein is Putative ankyrin repeat protein FPV022 of Fowlpox virus (strain NVSL) (FPV).